We begin with the raw amino-acid sequence, 175 residues long: Gamma-crystallin M1 (175 aa).

Beta/gamma crystallin 'Greek key' domains lie at 2 to 40 (GKII…RVES), 41 to 86 (GCFM…RYPY), 89 to 121 (FRMR…RMSD), and 130 to 172 (GHWL…RRIT).

The protein belongs to the beta/gamma-crystallin family. As to quaternary structure, monomer.

In terms of biological role, crystallins are the dominant structural components of the vertebrate eye lens. This Chiloscyllium indicum (Slender bamboo shark) protein is Gamma-crystallin M1 (GM1).